We begin with the raw amino-acid sequence, 538 residues long: Calcium-dependent protein kinase 32 (538 aa).

The disordered stretch occupies residues M1–G37. G2 is lipidated: N-myristoyl glycine. The Protein kinase domain occupies Y63–L321. Residues L69–T77 and K92 each bind ATP. Residue D187 is the Proton acceptor of the active site. Phosphoserine is present on S227. An autoinhibitory domain region spans residues A327–I357. 4 EF-hand domains span residues E364 to A399, I400 to M435, G436 to G470, and T471 to W506. Ca(2+) contacts are provided by D377, S379, K383, E388, D413, D415, D417, Y419, E424, D449, N451, N453, Y455, E460, D484, D486, D488, and R490. A Phosphoserine modification is found at S492. Residue E495 coordinates Ca(2+).

This sequence belongs to the protein kinase superfamily. Ser/Thr protein kinase family. CDPK subfamily. Interacts with ABF4. Interacts with CNGC18. Expressed in embryos and most of the vegetative tissues.

The protein resides in the nucleus. Its subcellular location is the membrane. It carries out the reaction L-seryl-[protein] + ATP = O-phospho-L-seryl-[protein] + ADP + H(+). The catalysed reaction is L-threonyl-[protein] + ATP = O-phospho-L-threonyl-[protein] + ADP + H(+). Its activity is regulated as follows. Activated by calcium. Autophosphorylation may play an important role in the regulation of the kinase activity. Its function is as follows. May play a role in signal transduction pathways that involve calcium as a second messenger. Involved in maintaining Ca2+ homeostasis in pollen tube tips by regulating CNGC18. Functions as regulator of the calcium-mediated abscisic acid (ABA) signaling pathway. Phosphorylates ABA-responsive transcription factor ABF4 in vitro. The sequence is that of Calcium-dependent protein kinase 32 from Arabidopsis thaliana (Mouse-ear cress).